The following is a 306-amino-acid chain: Serine/threonine-protein phosphatase 2A catalytic subunit A (306 aa).

The Mn(2+) site is built by aspartate 54, histidine 56, aspartate 82, and asparagine 114. Histidine 115 (proton donor) is an active-site residue. 2 residues coordinate Mn(2+): histidine 164 and histidine 238. The residue at position 306 (leucine 306) is a Leucine methyl ester.

It belongs to the PPP phosphatase family. PP-2A subfamily. PP2A consists of a trimeric holoenzyme, composed of a 37 kDa catalytic subunit (C subunit) and a 65 kDa constant regulatory subunit (A subunit), that associates with a variety of regulatory subunits (B subunit) such as phr2AB (B55) and psrA (B56 homolog). The trimer may partially dissociates into a core 'AC' dimer equally active compared to the trimer. Mn(2+) serves as cofactor. In terms of processing, reversibly methyl esterified on Leu-306 by leucine carboxyl methyltransferase 1 (LCMT) and protein phosphatase methylesterase 1 (PPME1). Carboxyl methylation influences the affinity of the catalytic subunit for the different regulatory subunits, thereby modulating the PP2A holoenzyme's substrate specificity, enzyme activity and cellular localization.

It is found in the cytoplasm. The protein localises to the cytosol. The protein resides in the nucleus speckle. The catalysed reaction is O-phospho-L-seryl-[protein] + H2O = L-seryl-[protein] + phosphate. The enzyme catalyses O-phospho-L-threonyl-[protein] + H2O = L-threonyl-[protein] + phosphate. Functionally, plays a role in activating the myosin contractile function. Dephosphorylates threonine at 'Thr-1823', 'Thr-1833' and 'Thr-2029' in the C-terminal tail region of myosin II heavy chain (mhcA). Drives the assembly of dephosphorylated myosin II filaments to allow myosin recruitment into the cytoskeleton. The protein is Serine/threonine-protein phosphatase 2A catalytic subunit A (pho2a) of Dictyostelium discoideum (Social amoeba).